A 424-amino-acid chain; its full sequence is 23S rRNA (uracil(1939)-C(5))-methyltransferase RlmD (424 aa).

Positions 1–56 (MEKFPAVTVFDLDYQGRGVAKIDGQVVFIEGALPDETVTFCKTSAKKQFIEAVVDE) constitute a TRAM domain. The [4Fe-4S] cluster site is built by C69, C75, C78, and C155. S-adenosyl-L-methionine is bound by residues Q255, F284, N289, E305, D333, and D354. The Nucleophile role is filled by C380.

Belongs to the class I-like SAM-binding methyltransferase superfamily. RNA M5U methyltransferase family. RlmD subfamily.

It carries out the reaction uridine(1939) in 23S rRNA + S-adenosyl-L-methionine = 5-methyluridine(1939) in 23S rRNA + S-adenosyl-L-homocysteine + H(+). In terms of biological role, catalyzes the formation of 5-methyl-uridine at position 1939 (m5U1939) in 23S rRNA. In Dichelobacter nodosus (strain VCS1703A), this protein is 23S rRNA (uracil(1939)-C(5))-methyltransferase RlmD.